The following is a 300-amino-acid chain: Actin-related protein 2/3 complex subunit 2-A (300 aa).

Belongs to the ARPC2 family. As to quaternary structure, component of the Arp2/3 complex composed of actr2/arp2, actr3/arp3, arpc1 (arpc1a or arpc1b), arpc2, arpc3, arpc4 and arpc5.

The protein resides in the cytoplasm. It is found in the cytoskeleton. It localises to the cell projection. The protein localises to the nucleus. Functionally, actin-binding component of the Arp2/3 complex, a multiprotein complex that mediates actin polymerization upon stimulation by nucleation-promoting factor (NPF). The Arp2/3 complex mediates the formation of branched actin networks in the cytoplasm, providing the force for cell motility. In addition to its role in the cytoplasmic cytoskeleton, the Arp2/3 complex also promotes actin polymerization in the nucleus, thereby regulating gene transcription and repair of damaged DNA. The Arp2/3 complex promotes homologous recombination (HR) repair in response to DNA damage by promoting nuclear actin polymerization, leading to drive motility of double-strand breaks (DSBs). The polypeptide is Actin-related protein 2/3 complex subunit 2-A (arpc2-a) (Xenopus laevis (African clawed frog)).